The sequence spans 126 residues: Thioredoxin domain-containing protein, mitochondrial (126 aa).

The region spanning 14 to 120 (SQKIATNTSF…ILEFLNHIET (107 aa)) is the Thioredoxin domain.

Belongs to the thioredoxin family.

The protein localises to the mitochondrion. The chain is Thioredoxin domain-containing protein, mitochondrial from Dictyostelium discoideum (Social amoeba).